The sequence spans 990 residues: Putative ariadne-like RING finger protein R811 (990 aa).

The region spanning 8-201 (DLAIVVDATG…IITQTTIKLL (194 aa)) is the VWFA domain. Residues 797-990 (EKGLCMICFN…GGAFEYDQDD (194 aa)) form a TRIAD supradomain region. Zn(2+)-binding residues include Cys801, Cys804, Cys827, and Cys830. The RING-type 1 zinc-finger motif lies at 801–854 (CMICFNEFSKSNLRQICGRKVCQSVACYDCMKSWYGENKVGDLIHVNALTCPFC). Residues 855 to 903 (KQCPMFNILAAFNRQVCAMVRTNNSFDIDWWYGWCLKCFQPKKVVEKEC) form an IBR-type zinc finger. Zn(2+) contacts are provided by Cys930 and Cys935. The RING-type 2; atypical zinc finger occupies 930 to 961 (CPNSLCKIPIIKDGGCNHMECTACKKHFCWLC). The active site involves Cys945. Positions 950 and 953 each coordinate Zn(2+).

In Acanthamoeba polyphaga (Amoeba), this protein is Putative ariadne-like RING finger protein R811.